The chain runs to 305 residues: DNA-directed RNA polymerase 35 kDa subunit (305 aa).

This sequence belongs to the poxviridae DNA-directed RNA polymerase 35 kDa subunit family. The DNA-dependent RNA polymerase used for intermediate and late genes expression consists of eight subunits 147 kDa, 133 kDa, 35 kDa, 30 kDa, 22 kDa, 19 kDa, 18 kDa and 7 kDa totalling more than 500 kDa in mass. The same holoenzyme, with the addition of the transcription-specificity factor RAP94, is used for early gene expression.

Its subcellular location is the virion. It carries out the reaction RNA(n) + a ribonucleoside 5'-triphosphate = RNA(n+1) + diphosphate. Part of the DNA-dependent RNA polymerase which catalyzes the transcription of viral DNA into RNA using the four ribonucleoside triphosphates as substrates. Responsible for the transcription of early, intermediate and late genes. DNA-dependent RNA polymerase associates with the early transcription factor (ETF), itself composed of D6 and A7, thereby allowing the early genes transcription. Late transcription, and probably also intermediate transcription, require newly synthesized RNA polymerase. The protein is DNA-directed RNA polymerase 35 kDa subunit (RPO35) of Homo sapiens (Human).